The chain runs to 433 residues: Serendipity locus protein delta (433 aa).

The region spanning 1–90 is the ZAD domain; the sequence is MDTCFFCGAV…TQKRLTTQLK (90 aa). Residues Cys4, Cys7, Cys61, and Cys64 each contribute to the Zn(2+) site. The disordered stretch occupies residues 141–162; it reads DTEIKREFVDEEEEEDDDDDDE. A compositionally biased stretch (acidic residues) spans 149–162; sequence VDEEEEEDDDDDDE. The Nuclear localization signal motif lies at 187–193; sequence PTKKRVK. 7 C2H2-type zinc fingers span residues 194-217, 223-245, 251-273, 279-301, 308-330, 337-359, and 405-428; these read QECT…SEEH, HICP…MNLH, KQCR…MRMH, YQCE…RLRH, IICS…TLIH, HYCS…MKTH, and GFCL…QFDH.

In terms of assembly, homodimer (via ZAD domain) in solution. Binds DNA as a homodimer. N-terminal regions of the protein are required, in addition to the zinc fingers, for the specificity of chromatin-binding. As to expression, predominantly localized to the sub- and supraesophagal ganglia and the ventral nerve cord in the embryo, after dorsal closure.

Its subcellular location is the nucleus. Functionally, transcriptional activator that controls bicoid gene expression during oogenesis. Found in transcriptionally active cells. Binds to specific sites on polytene chromosomes of third instar larvae. Binds to the consensus DNA sequence 5'-YTAGAGATGGRAA-3'. This Drosophila melanogaster (Fruit fly) protein is Serendipity locus protein delta (Sry-delta).